Here is a 101-residue protein sequence, read N- to C-terminus: Iron-sulfur cluster assembly protein CyaY (101 aa).

It belongs to the frataxin family.

Functionally, involved in iron-sulfur (Fe-S) cluster assembly. May act as a regulator of Fe-S biogenesis. In Rickettsia felis (strain ATCC VR-1525 / URRWXCal2) (Rickettsia azadi), this protein is Iron-sulfur cluster assembly protein CyaY.